We begin with the raw amino-acid sequence, 160 residues long: uncharacterized protein (160 aa).

The Zn(2+) site is built by C26, C28, C50, and H61. The GRF-type; atypical zinc finger occupies 26–69 (CWCGEEIITFTSKTKENPYRRFYRCAIAMKRENEEHLFKWVDEA).

This is an uncharacterized protein from Arabidopsis thaliana (Mouse-ear cress).